The primary structure comprises 838 residues: G-protein coupled receptor-associated sorting protein 2 (838 aa).

Disordered regions lie at residues 1–122 (MTGA…GARP), 218–292 (ASNE…SNPF), 349–368 (RFRH…RAQK), and 531–552 (LELS…PSPE). Basic and acidic residues predominate over residues 13–31 (KPEKKAGEEVIAGPEREND). Polar residues predominate over residues 220–245 (NESGFWSADETSTASSFWTGEETSVR). A compositionally biased stretch (basic residues) spans 255 to 271 (RSRHRAKHQTNPRSRPR). Residues Ser-282 and Ser-284 each carry the phosphoserine modification. Over residues 542–552 (SLLQPDQPSPE) the composition is skewed to polar residues.

The protein belongs to the GPRASP family. In terms of assembly, interacts with cytoplasmic tails of a variety of G-protein coupled receptors such as muscarinic acetylcholine receptor M1/CHRM1 and calcitonin receptor/CALCR. As to expression, expressed in the brain.

Its function is as follows. May play a role in regulation of a variety of G-protein coupled receptors. The chain is G-protein coupled receptor-associated sorting protein 2 (GPRASP2) from Homo sapiens (Human).